A 494-amino-acid polypeptide reads, in one-letter code: 3-octaprenyl-4-hydroxybenzoate carboxy-lyase (494 aa).

Asn-172 is a binding site for Mn(2+). Residues 175-177 (IYR), 189-191 (RWL), and 194-195 (RG) each bind prenylated FMN. A Mn(2+)-binding site is contributed by Glu-238. Asp-287 serves as the catalytic Proton donor.

It belongs to the UbiD family. As to quaternary structure, homohexamer. Requires prenylated FMN as cofactor. Mn(2+) is required as a cofactor.

The protein resides in the cell membrane. It catalyses the reaction a 4-hydroxy-3-(all-trans-polyprenyl)benzoate + H(+) = a 2-(all-trans-polyprenyl)phenol + CO2. The protein operates within cofactor biosynthesis; ubiquinone biosynthesis. In terms of biological role, catalyzes the decarboxylation of 3-octaprenyl-4-hydroxy benzoate to 2-octaprenylphenol, an intermediate step in ubiquinone biosynthesis. The protein is 3-octaprenyl-4-hydroxybenzoate carboxy-lyase of Citrobacter koseri (strain ATCC BAA-895 / CDC 4225-83 / SGSC4696).